We begin with the raw amino-acid sequence, 99 residues long: MSAISRSEVEHLARLARIDMTDEELDRMAGQLDAVLDAVAQVASVVTDDVPATSHPVPLTNVTRPDVVRPGLTAEEALAGAPASEDGRFRVPQILGEEA.

The protein belongs to the GatC family. Heterotrimer of A, B and C subunits.

The enzyme catalyses L-glutamyl-tRNA(Gln) + L-glutamine + ATP + H2O = L-glutaminyl-tRNA(Gln) + L-glutamate + ADP + phosphate + H(+). It catalyses the reaction L-aspartyl-tRNA(Asn) + L-glutamine + ATP + H2O = L-asparaginyl-tRNA(Asn) + L-glutamate + ADP + phosphate + 2 H(+). In terms of biological role, allows the formation of correctly charged Asn-tRNA(Asn) or Gln-tRNA(Gln) through the transamidation of misacylated Asp-tRNA(Asn) or Glu-tRNA(Gln) in organisms which lack either or both of asparaginyl-tRNA or glutaminyl-tRNA synthetases. The reaction takes place in the presence of glutamine and ATP through an activated phospho-Asp-tRNA(Asn) or phospho-Glu-tRNA(Gln). The polypeptide is Aspartyl/glutamyl-tRNA(Asn/Gln) amidotransferase subunit C (Kineococcus radiotolerans (strain ATCC BAA-149 / DSM 14245 / SRS30216)).